A 104-amino-acid polypeptide reads, in one-letter code: Large ribosomal subunit protein uL24 (104 aa).

This sequence belongs to the universal ribosomal protein uL24 family. As to quaternary structure, part of the 50S ribosomal subunit.

In terms of biological role, one of two assembly initiator proteins, it binds directly to the 5'-end of the 23S rRNA, where it nucleates assembly of the 50S subunit. One of the proteins that surrounds the polypeptide exit tunnel on the outside of the subunit. This Rhodopseudomonas palustris (strain BisB5) protein is Large ribosomal subunit protein uL24.